The following is a 1247-amino-acid chain: uncharacterized protein (1247 aa).

8 disordered regions span residues 25–141 (KYNN…HSPP), 169–431 (AANN…QQPQ), 472–667 (QQQP…PSSS), 738–770 (NSNS…SEPI), 807–857 (YSNR…QNIE), 869–1087 (GKNF…NNNN), 1099–1122 (STLN…ESQQ), and 1139–1162 (QQQQ…KGDG). Over residues 26–125 (YNNSNNYNNN…SNNSINSNSY (100 aa)) the composition is skewed to low complexity. The span at 126–139 (KVNTPTQNGKSSHS) shows a compositional bias: polar residues. Composition is skewed to low complexity over residues 169–178 (AANNGSSNSS), 185–223 (SNSN…NYNS), and 230–341 (NNNN…YSNS). The segment covering 342 to 356 (KYNQQKSYNNAPHQL) has biased composition (polar residues). Low complexity-rich tracts occupy residues 363-375 (NSYY…NNGN), 385-394 (GSGNSSNSNG), 409-431 (QSQS…QQPQ), and 472-484 (QQQP…QQQQ). Residues 511 to 522 (GLNNSLNGQTDL) show a composition bias toward polar residues. 6 stretches are compositionally biased toward low complexity: residues 523–544 (NNSN…TNNN), 553–628 (YNYN…VGSN), 655–667 (TPSS…PSSS), 738–759 (NSNS…NNNH), 807–855 (YSNR…DSQN), and 871–928 (NFNN…ENNN). The span at 929–942 (GDVFSNGFSTWTPK) shows a compositional bias: polar residues. Low complexity predominate over residues 943–983 (SGSNSLNNSQNNLSNGQNSSNNSQNNLNNSQNSLNSSGNHH). Over residues 984-995 (SNYHGHNNHHHY) the composition is skewed to basic residues. Low complexity predominate over residues 996 to 1021 (NNNNNNNNNNNNNNNNNNNNNNNGNG). The segment covering 1026 to 1044 (YYNNKYQQKSPQHQSSNSV) has biased composition (polar residues). Residues 1047 to 1060 (IPPPGFSTIAPPPG) show a composition bias toward pro residues. The segment covering 1064 to 1087 (NNNNNNNNNNNNNNNKNNNSNNNN) has biased composition (low complexity). The segment covering 1099-1108 (STLNNSQDDS) has biased composition (polar residues). Residues 1110–1122 (QQEQEQQEQESQQ) are compositionally biased toward low complexity.

This is an uncharacterized protein from Dictyostelium discoideum (Social amoeba).